The following is an 820-amino-acid chain: Leucine--tRNA ligase (820 aa).

A 'HIGH' region motif is present at residues 42–52 (PYPSGDLHMGH). The 'KMSKS' region motif lies at 576–580 (KMSKS). Lys579 serves as a coordination point for ATP.

Belongs to the class-I aminoacyl-tRNA synthetase family.

It is found in the cytoplasm. It carries out the reaction tRNA(Leu) + L-leucine + ATP = L-leucyl-tRNA(Leu) + AMP + diphosphate. This chain is Leucine--tRNA ligase, found in Coxiella burnetii (strain Dugway 5J108-111).